A 400-amino-acid polypeptide reads, in one-letter code: MKAICVNFGPQHPAAHGVLRLILQLNGEVVEKMDIHIGLLHRGSEKLMETKPYLQSMPYFDRLDYVSMMVQEHAYCLAIEALLNTTNYTANFVLVRTMFDELTRILNHMLAIACHALDIGSMSSIFWAFEEREKIMEFYERVCGRRMHAAFYRPNEVNLNFLSVKLLTDILEFNNNCLTTLSEMHNILTYNKIWKQRLVNIGSISYKDCLDFGLTGVMARSTGIKRDLRMDAFDTYANYYYLNFRSYTGQAGDSYDRFLIRMNEMSESINIISQAIFKLTTSKNTCSPASILKALNKKKFISQTYKNEYSSMEKLITHFKYWSEGFKIQSNWTYQAVESPKGEFGVTLVSDGSNKPYRCKVRSPAYHHLQVLPKMSKGHLLADLSALIGTIDIVFGEIDR.

The protein belongs to the complex I 49 kDa subunit family.

Its subcellular location is the mitochondrion. It carries out the reaction a ubiquinone + NADH + 5 H(+)(in) = a ubiquinol + NAD(+) + 4 H(+)(out). In terms of biological role, core subunit of the mitochondrial membrane respiratory chain NADH dehydrogenase (Complex I) that is believed to belong to the minimal assembly required for catalysis. Complex I functions in the transfer of electrons from NADH to the respiratory chain. The immediate electron acceptor for the enzyme is believed to be ubiquinone. Component of the iron-sulfur (IP) fragment of the enzyme. Component of the iron-sulfur (IP) fragment of the enzyme. The protein is NADH-ubiquinone oxidoreductase 49 kDa subunit (NAD7) of Paramecium tetraurelia.